We begin with the raw amino-acid sequence, 406 residues long: Bifunctional enzyme Fae/Hps (406 aa).

Positions 1–164 are formaldehyde-activating enzyme; it reads MSDIYEIGEA…AEKDRGTHPI (164 aa). The Proton donor role is filled by H20. Substrate-binding residues include D22, L51, K69, T71, and Q86. Residues 165–406 are 3-hexulose-6-phosphate synthase; that stretch reads MGFKAMKLWN…RLALDEDEKI (242 aa).

It in the N-terminal section; belongs to the formaldehyde-activating enzyme family. This sequence in the C-terminal section; belongs to the HPS/KGPDC family. HPS subfamily.

It carries out the reaction 5,6,7,8-tetrahydromethanopterin + formaldehyde = 5,10-methylenetetrahydromethanopterin + H2O. The enzyme catalyses D-ribulose 5-phosphate + formaldehyde = D-arabino-hex-3-ulose 6-phosphate. The protein operates within carbohydrate biosynthesis; D-ribose 5-phosphate biosynthesis. Its function is as follows. Catalyzes the condensation of formaldehyde with tetrahydromethanopterin (H(4)MPT) to 5,10-methylenetetrahydromethanopterin. In terms of biological role, catalyzes the reversible formation of ribulose-5-phosphate and formaldehyde from 3-hexulose-6-phosphate. In Methanosphaera stadtmanae (strain ATCC 43021 / DSM 3091 / JCM 11832 / MCB-3), this protein is Bifunctional enzyme Fae/Hps.